The following is a 1267-amino-acid chain: Ankyrin repeat and ELMO domain-containing protein D (1267 aa).

Residues 307–466 form the ELMO domain; it reads SHQRLLETLW…FVSGLASEVL (160 aa). Residues 486-496 show a composition bias toward basic and acidic residues; it reads KKKEKKSEKRG. Positions 486–598 are disordered; that stretch reads KKKEKKSEKR…NNHILNNNHL (113 aa). Residues 507–598 show a composition bias toward low complexity; sequence GSNGNINSTT…NNHILNNNHL (92 aa). 4 ANK repeats span residues 655 to 685, 689 to 718, 767 to 796, and 801 to 830; these read DGNS…FLNT, QGLT…DPFI, TLET…NINN, and SGQN…DPSI. Disordered stretches follow at residues 854 to 908, 924 to 1040, 1057 to 1082, and 1103 to 1215; these read NPTK…NSTS, TSIN…SPIF, SPTQ…NGAE, and ENLT…PPKD. 3 stretches are compositionally biased toward low complexity: residues 859 to 870, 895 to 908, and 924 to 1033; these read SRSTSSTSSSTS, ITNN…NSTS, and TSIN…STSP. The span at 1057–1080 shows a compositional bias: polar residues; it reads SPTQESPQVISTPTSPPYLSNNNG. Composition is skewed to low complexity over residues 1108–1176 and 1184–1213; these read NSGN…IGSH and HNGP…VTPP.

The sequence is that of Ankyrin repeat and ELMO domain-containing protein D (elmoD) from Dictyostelium discoideum (Social amoeba).